The following is a 757-amino-acid chain: Catalase-peroxidase 2 (757 aa).

Positions 1–26 are cleaved as a signal peptide; that stretch reads MKHPLFNQKVLAGFVSMLLISGSAFA. The tryptophyl-tyrosyl-methioninium (Trp-Tyr) (with M-274) cross-link spans 126–248; that stretch reads WHSAGTYRTL…LGATHMGLIY (123 aa). The active-site Proton acceptor is H127. A cross-link (tryptophyl-tyrosyl-methioninium (Tyr-Met) (with W-126)) is located at residues 248 to 274; sequence YVNPEGPKGVPDPLGSAKNIRVAFERM. H289 lines the heme b pocket.

The protein belongs to the peroxidase family. Peroxidase/catalase subfamily. As to quaternary structure, homodimer or homotetramer. Requires heme b as cofactor. Post-translationally, formation of the three residue Trp-Tyr-Met cross-link is important for the catalase, but not the peroxidase activity of the enzyme.

The catalysed reaction is H2O2 + AH2 = A + 2 H2O. It carries out the reaction 2 H2O2 = O2 + 2 H2O. In terms of biological role, bifunctional enzyme with both catalase and broad-spectrum peroxidase activity. The chain is Catalase-peroxidase 2 from Shewanella frigidimarina (strain NCIMB 400).